The following is a 907-amino-acid chain: DNA mismatch repair protein MutS (907 aa).

Residue 656 to 663 (GPNMAGKS) coordinates ATP.

It belongs to the DNA mismatch repair MutS family.

In terms of biological role, this protein is involved in the repair of mismatches in DNA. It is possible that it carries out the mismatch recognition step. This protein has a weak ATPase activity. The sequence is that of DNA mismatch repair protein MutS from Nitrobacter hamburgensis (strain DSM 10229 / NCIMB 13809 / X14).